A 137-amino-acid polypeptide reads, in one-letter code: uncharacterized protein (137 aa).

The first 19 residues, 1-19 (MVAFYGIFLFGTVYLFGLA), serve as a signal peptide directing secretion.

This is an uncharacterized protein from Acanthamoeba polyphaga (Amoeba).